A 119-amino-acid polypeptide reads, in one-letter code: DNA-directed RNA polymerase subunit omega (119 aa).

The protein belongs to the RNA polymerase subunit omega family. In terms of assembly, the RNAP catalytic core consists of 2 alpha, 1 beta, 1 beta' and 1 omega subunit. When a sigma factor is associated with the core the holoenzyme is formed, which can initiate transcription.

It carries out the reaction RNA(n) + a ribonucleoside 5'-triphosphate = RNA(n+1) + diphosphate. In terms of biological role, promotes RNA polymerase assembly. Latches the N- and C-terminal regions of the beta' subunit thereby facilitating its interaction with the beta and alpha subunits. The chain is DNA-directed RNA polymerase subunit omega from Caulobacter sp. (strain K31).